We begin with the raw amino-acid sequence, 515 residues long: Galactose-1-phosphate uridylyltransferase (515 aa).

It belongs to the galactose-1-phosphate uridylyltransferase type 2 family.

It is found in the cytoplasm. The catalysed reaction is alpha-D-galactose 1-phosphate + UDP-alpha-D-glucose = alpha-D-glucose 1-phosphate + UDP-alpha-D-galactose. Its pathway is carbohydrate metabolism; galactose metabolism. Functionally, transfers the UMP unit from UDP-glucose (UDP-Glc) to Gal1P. Can also transfer the UMP unit to GlcNAc1P and GalNAc1P. Involved in the general galactose metabolism, and also involved in the lacto-N-biose I/galacto-N-biose (LNB/GNB) degradation pathway, which is important for host intestinal colonization by bifidobacteria. The chain is Galactose-1-phosphate uridylyltransferase from Bifidobacterium longum subsp. longum (strain ATCC 15707 / DSM 20219 / JCM 1217 / NCTC 11818 / E194b).